A 398-amino-acid polypeptide reads, in one-letter code: Leucine aminopeptidase 1 (398 aa).

An N-terminal signal peptide occupies residues 1 to 20 (MKFLQTSLIAAALPAALVSG). Residues 21-87 (RFVIENEGDN…LRAWTQSQAS (67 aa)) constitute a propeptide that is removed on maturation. Asn-179 is a glycosylation site (N-linked (GlcNAc...) asparagine). Residues His-187, Asp-206, Glu-245, and Asp-272 each coordinate Zn(2+). Residues Cys-321 and Cys-325 are joined by a disulfide bond. His-354 provides a ligand contact to Zn(2+).

This sequence belongs to the peptidase M28 family. M28E subfamily. Monomer. Zn(2+) serves as cofactor.

The protein localises to the secreted. Extracellular aminopeptidase that allows assimilation of proteinaceous substrates. The polypeptide is Leucine aminopeptidase 1 (lap1) (Trichoderma harzianum (Hypocrea lixii)).